Here is a 327-residue protein sequence, read N- to C-terminus: 2-keto-3-deoxygluconate permease (327 aa).

10 consecutive transmembrane segments (helical) span residues 10–30 (IPGG…TFSP), 42–62 (GMIT…GASI), 73–93 (KSGT…AIAS), 95–115 (IIPE…LALV), 139–159 (AGAF…IILG), 163–183 (IASF…VGFA), 199–219 (VQTL…LTVI), 224–244 (LLGI…LIIA), 254–274 (TAGI…VLIA), and 289–309 (SLVA…TSIW).

The protein belongs to the KdgT transporter family.

It is found in the cell inner membrane. The enzyme catalyses 2-dehydro-3-deoxy-D-gluconate(in) + H(+)(in) = 2-dehydro-3-deoxy-D-gluconate(out) + H(+)(out). Catalyzes the proton-dependent uptake of 2-keto-3-deoxygluconate (KDG) into the cell. The chain is 2-keto-3-deoxygluconate permease from Escherichia coli O7:K1 (strain IAI39 / ExPEC).